A 375-amino-acid chain; its full sequence is Putative glutamate--cysteine ligase 2 (375 aa).

Belongs to the glutamate--cysteine ligase type 2 family. YbdK subfamily.

The enzyme catalyses L-cysteine + L-glutamate + ATP = gamma-L-glutamyl-L-cysteine + ADP + phosphate + H(+). In terms of biological role, ATP-dependent carboxylate-amine ligase which exhibits weak glutamate--cysteine ligase activity. This is Putative glutamate--cysteine ligase 2 from Sorangium cellulosum (strain So ce56) (Polyangium cellulosum (strain So ce56)).